The sequence spans 203 residues: Large ribosomal subunit protein bL25 (203 aa).

It belongs to the bacterial ribosomal protein bL25 family. CTC subfamily. As to quaternary structure, part of the 50S ribosomal subunit; part of the 5S rRNA/L5/L18/L25 subcomplex. Contacts the 5S rRNA. Binds to the 5S rRNA independently of L5 and L18.

This is one of the proteins that binds to the 5S RNA in the ribosome where it forms part of the central protuberance. This chain is Large ribosomal subunit protein bL25, found in Rickettsia rickettsii (strain Iowa).